The following is a 309-amino-acid chain: Glutaminase (309 aa).

Substrate is bound by residues Ser64, Asn114, Glu160, Asn167, Tyr191, Tyr243, and Val261.

Belongs to the glutaminase family. In terms of assembly, homotetramer.

The catalysed reaction is L-glutamine + H2O = L-glutamate + NH4(+). The polypeptide is Glutaminase (Rhizobium johnstonii (strain DSM 114642 / LMG 32736 / 3841) (Rhizobium leguminosarum bv. viciae)).